Consider the following 70-residue polypeptide: Palustrin-2ISa (70 aa).

A signal peptide spans 1-22 (MFTLKKSLLLLFFLGTISLSLC). Positions 23–39 (EQERSAEDEGEVIEEEV) are cleaved as a propeptide — removed in mature form. Cysteines 64 and 70 form a disulfide.

In terms of tissue distribution, expressed by the skin glands.

Its subcellular location is the secreted. Has antimicrobial activity against Gram-negative bacterium E.coli ATCC 8739 (MIC=100 ug), against Gram positive bacteria S.aureus ATCC 6538 (MIC=25 ug), methicillin-resistant S.aureus ATCC 43300 (MIC=100 ug), B.subtilis ATCC 6633 (MIC=12.5 ug) and against fungus C.albicans ATCC 90028 (MIC=100 ug). The polypeptide is Palustrin-2ISa (Odorrana ishikawae (Ishikawa's frog)).